We begin with the raw amino-acid sequence, 413 residues long: MNISRLFSFLFHGNLVKRISIGLLLGIIFALVSPSLESALGFHLAEKMGLLGQIFVRSLRSVAPILVFVLVIAAIANKKVGSKSNMKDIIYLYLIGTFLSALTAVFASFMFPTTIALATNEAELSPPGKITEVLTALIFNVVDNPITALFNANFIGILAWAIGLGITLRYASETTKNVMNDFAEAVSKIVHFIISFAPIGVFGLVASTLADKGLSALLDYVQLLAVLVGSMLFVAFVINPIIVFWKIRRNPYPLVWECIRVSGVTAFFTRSSAANIPVNMELAKRLNLDEETYSVSIPLGATINMGGAAITITVLTLAAVFTLGIEVSIPTAILLSLVASICACGASGVAGGSLLLIPLACSLFGISNDIAAQVIGVGFIIGVLQDSTETALNSSTDVLFTAAACMSEERKNS.

The next 9 helical transmembrane spans lie at 21–41 (IGLLLGIIFALVSPSLESALG), 61–81 (SVAPILVFVLVIAAIANKKVG), 89–109 (IIYLYLIGTFLSALTAVFASF), 146–166 (ITALFNANFIGILAWAIGLGI), 189–209 (IVHFIISFAPIGVFGLVASTL), 224–244 (LAVLVGSMLFVAFVINPIIVF), 305–325 (MGGAAITITVLTLAAVFTLGI), 337–357 (LVASICACGASGVAGGSLLLI), and 363–383 (LFGISNDIAAQVIGVGFIIGV).

Belongs to the dicarboxylate/amino acid:cation symporter (DAACS) (TC 2.A.23) family.

It localises to the cell inner membrane. The enzyme catalyses L-serine(in) + Na(+)(in) = L-serine(out) + Na(+)(out). The catalysed reaction is L-threonine(in) + Na(+)(in) = L-threonine(out) + Na(+)(out). Involved in the import of serine and threonine into the cell, with the concomitant import of sodium (symport system). This Mannheimia succiniciproducens (strain KCTC 0769BP / MBEL55E) protein is Serine/threonine transporter SstT.